The sequence spans 281 residues: 3-methyl-2-oxobutanoate hydroxymethyltransferase (281 aa).

The Mg(2+) site is built by Asp44 and Asp83. 3-methyl-2-oxobutanoate is bound by residues 44–45, Asp83, and Lys112; that span reads DS. Glu114 contacts Mg(2+). Residue Glu180 is the Proton acceptor of the active site. The segment at 251–281 is disordered; it reads RNGTFPGPEHSSRMDPAELAAALGSQDQATE.

Belongs to the PanB family. Homodecamer; pentamer of dimers. The cofactor is Mg(2+).

The protein resides in the cytoplasm. The catalysed reaction is 3-methyl-2-oxobutanoate + (6R)-5,10-methylene-5,6,7,8-tetrahydrofolate + H2O = 2-dehydropantoate + (6S)-5,6,7,8-tetrahydrofolate. The protein operates within cofactor biosynthesis; (R)-pantothenate biosynthesis; (R)-pantoate from 3-methyl-2-oxobutanoate: step 1/2. Functionally, catalyzes the reversible reaction in which hydroxymethyl group from 5,10-methylenetetrahydrofolate is transferred onto alpha-ketoisovalerate to form ketopantoate. The protein is 3-methyl-2-oxobutanoate hydroxymethyltransferase of Chloroflexus aurantiacus (strain ATCC 29364 / DSM 637 / Y-400-fl).